The following is a 333-amino-acid chain: Ketol-acid reductoisomerase (NADP(+)) (333 aa).

Positions T6–T186 constitute a KARI N-terminal Rossmann domain. NADP(+) is bound by residues Y29–Q32, K52, S55, S57, and D87–Q90. Residue H112 is part of the active site. NADP(+) is bound at residue G138. The region spanning T187–S332 is the KARI C-terminal knotted domain. 4 residues coordinate Mg(2+): D195, E199, E231, and E235. Substrate is bound at residue S256.

Belongs to the ketol-acid reductoisomerase family. It depends on Mg(2+) as a cofactor.

It catalyses the reaction (2R)-2,3-dihydroxy-3-methylbutanoate + NADP(+) = (2S)-2-acetolactate + NADPH + H(+). The catalysed reaction is (2R,3R)-2,3-dihydroxy-3-methylpentanoate + NADP(+) = (S)-2-ethyl-2-hydroxy-3-oxobutanoate + NADPH + H(+). It functions in the pathway amino-acid biosynthesis; L-isoleucine biosynthesis; L-isoleucine from 2-oxobutanoate: step 2/4. The protein operates within amino-acid biosynthesis; L-valine biosynthesis; L-valine from pyruvate: step 2/4. Involved in the biosynthesis of branched-chain amino acids (BCAA). Catalyzes an alkyl-migration followed by a ketol-acid reduction of (S)-2-acetolactate (S2AL) to yield (R)-2,3-dihydroxy-isovalerate. In the isomerase reaction, S2AL is rearranged via a Mg-dependent methyl migration to produce 3-hydroxy-3-methyl-2-ketobutyrate (HMKB). In the reductase reaction, this 2-ketoacid undergoes a metal-dependent reduction by NADPH to yield (R)-2,3-dihydroxy-isovalerate. The polypeptide is Ketol-acid reductoisomerase (NADP(+)) (Tropheryma whipplei (strain Twist) (Whipple's bacillus)).